The primary structure comprises 104 residues: DNA-directed RNA polymerase subunit omega (104 aa).

Residues 53 to 104 (EIESGNVTIHPDPEGKREAVRRRIEEEKRRKEEEEKKIKEQIAKEKEDGEKI) form a disordered region. Residues 63–104 (PDPEGKREAVRRRIEEEKRRKEEEEKKIKEQIAKEKEDGEKI) are compositionally biased toward basic and acidic residues.

This sequence belongs to the RNA polymerase subunit omega family. In terms of assembly, the RNAP catalytic core consists of 2 alpha, 1 beta, 1 beta' and 1 omega subunit. When a sigma factor is associated with the core the holoenzyme is formed, which can initiate transcription.

The enzyme catalyses RNA(n) + a ribonucleoside 5'-triphosphate = RNA(n+1) + diphosphate. In terms of biological role, promotes RNA polymerase assembly. Latches the N- and C-terminal regions of the beta' subunit thereby facilitating its interaction with the beta and alpha subunits. The protein is DNA-directed RNA polymerase subunit omega of Streptococcus pneumoniae serotype 2 (strain D39 / NCTC 7466).